The sequence spans 298 residues: Single myb histone 2 (298 aa).

The 61-residue stretch at 1-61 (MGVPKQRWTP…KWRNLSVTAG (61 aa)) folds into the HTH myb-type domain. Positions 28 to 57 (WRTILRDSDFSALLRLRSNVDLKDKWRNLS) form a DNA-binding region, H-T-H motif. The H15 domain occupies 124–192 (SVARLDDLIV…KVNQKYRIAP (69 aa)). The stretch at 237–278 (EEAAAFAAKAVAEAEVAMAEAEEAARVAEAAENDAEAAKAFL) forms a coiled coil.

The protein belongs to the histone H1/H5 family. SMH subfamily. In terms of assembly, forms a homodimer and heterodimers.

It localises to the nucleus. The protein localises to the chromosome. It is found in the nucleolus. Its subcellular location is the telomere. Functionally, binds preferentially double-stranded telomeric repeats, but may also bind to the single telomeric strand. The sequence is that of Single myb histone 2 (SMH2) from Zea mays (Maize).